A 456-amino-acid polypeptide reads, in one-letter code: Antizyme inhibitor 2 (456 aa).

The active-site Proton donor; shared with dimeric partner is C357.

This sequence belongs to the Orn/Lys/Arg decarboxylase class-II family. ODC antizyme inhibitor subfamily. As to quaternary structure, monomer. Interacts with OAZ1; this interaction disrupts the interaction between the antizyme and ODC1. Does not form a heterodimer with ODC1.

It is found in the nucleus. Its subcellular location is the cytoplasm. The protein localises to the perinuclear region. The protein resides in the membrane. It localises to the cytoplasmic vesicle. It is found in the endoplasmic reticulum-Golgi intermediate compartment. Its subcellular location is the golgi apparatus. The protein localises to the cis-Golgi network. The protein resides in the trans-Golgi network. It localises to the cytoplasmic granule. It is found in the cell projection. Its subcellular location is the axon. The protein localises to the dendrite. The protein resides in the perikaryon. Antizyme inhibitor (AZI) protein that positively regulates ornithine decarboxylase (ODC) activity and polyamine uptake. AZI is an enzymatically inactive ODC homolog that counteracts the negative effect of ODC antizyme (AZ) on ODC activity by competing with ODC for antizyme-binding. Inhibits antizyme-dependent ODC degradation and releases ODC monomers from their inactive complex with antizymes, leading to formation of the catalytically active ODC homodimer and restoring polyamine production. Participates in the morphological integrity of the trans-Golgi network (TGN) and functions as a regulator of intracellular secretory vesicle trafficking. The protein is Antizyme inhibitor 2 (azin2) of Xenopus laevis (African clawed frog).